Here is a 184-residue protein sequence, read N- to C-terminus: Endoribonuclease YbeY (184 aa).

Composition is skewed to acidic residues over residues 1–11 and 19–29; these read MTVEVGADENP and DGAGDESDDED. Residues 1–37 form a disordered region; it reads MTVEVGADENPDFAHDETDGAGDESDDEDAQGRDPEL. Positions 146, 150, and 156 each coordinate Zn(2+).

This sequence belongs to the endoribonuclease YbeY family. The cofactor is Zn(2+).

The protein resides in the cytoplasm. Functionally, single strand-specific metallo-endoribonuclease involved in late-stage 70S ribosome quality control and in maturation of the 3' terminus of the 16S rRNA. The chain is Endoribonuclease YbeY from Burkholderia mallei (strain ATCC 23344).